The chain runs to 765 residues: E3 ubiquitin-protein ligase SlrP (765 aa).

Residues 1–451 (MFNITNIQST…VDYQGPRVLF (451 aa)) are interaction with target proteins. 10 LRR repeats span residues 200–219 (QITT…ENLQ), 221–242 (NIKT…LPDT), 243–262 (IQEM…RLPS), 263–284 (ALQS…LPEE), 285–305 (LRYL…LPSG), 306–325 (ITHL…TLPP), 326–346 (GLKT…SLPP), 347–368 (ELQV…LPPT), 369–389 (ITTL…LPAA), and 390–410 (LQIM…LPHF). Residues 452-461 (AMGDFSIVRV) form a linker region. An E3 ubiquitin-protein ligase catalytic domain region spans residues 462 to 765 (TRPLHQAVQG…VSSLMSAYWR (304 aa)). An NEL domain is found at 464-758 (PLHQAVQGWL…NILLKKEVSS (295 aa)). Cys-546 serves as the catalytic Glycyl thioester intermediate.

It belongs to the LRR-containing bacterial E3 ligase family. As to quaternary structure, interacts with host TXN. In terms of processing, ubiquitinated in the presence of host E1 ubiquitin-activating enzyme, E2 ubiquitin-conjugating enzyme and ubiquitin.

Its subcellular location is the secreted. The protein resides in the host cytoplasm. The enzyme catalyses S-ubiquitinyl-[E2 ubiquitin-conjugating enzyme]-L-cysteine + [acceptor protein]-L-lysine = [E2 ubiquitin-conjugating enzyme]-L-cysteine + N(6)-ubiquitinyl-[acceptor protein]-L-lysine.. Binding to TXN is inhibited by hydrogen peroxide in vitro. Its function is as follows. Effector proteins function to alter host cell physiology and promote bacterial survival in host tissues. This protein is an E3 ubiquitin ligase that interferes with host's ubiquitination pathway. Can ubiquitinate both ubiquitin and host TXN (thioredoxin). Leads to significant decrease of thioredoxin activity and increase of host cell death. This Salmonella typhimurium (strain LT2 / SGSC1412 / ATCC 700720) protein is E3 ubiquitin-protein ligase SlrP (slrP).